The primary structure comprises 83 residues: uncharacterized protein (83 aa).

The disordered stretch occupies residues 15-36 (RLKNGRGNKTMSESDYNTSDSG). The segment covering 21-35 (GNKTMSESDYNTSDS) has biased composition (polar residues).

This is an uncharacterized protein from Aedes vexans (Inland floodwater mosquito).